Consider the following 156-residue polypeptide: C-type lectin lectoxin-Phi1 (156 aa).

The N-terminal stretch at 1 to 23 (MGRFIFVSLGLLVLAFSLSGIGA) is a signal peptide. 3 disulfide bridges follow: Cys-27-Cys-38, Cys-55-Cys-154, and Cys-129-Cys-146. The C-type lectin domain occupies 34–155 (HNVSCYKLIN…CNRRHRFLCK (122 aa)). N-linked (GlcNAc...) asparagine glycans are attached at residues Asn-35 and Asn-109. The short motif at 119–121 (EPN) is the Mannose-binding element. The Ca(2+) site is built by Glu-127, Asn-142, and Asp-143.

The protein belongs to the true venom lectin family. In terms of tissue distribution, expressed by the venom gland.

The protein resides in the secreted. In terms of biological role, mannose-binding lectin which recognizes specific carbohydrate structures and agglutinates a variety of animal cells by binding to cell-surface glycoproteins and glycolipids. May be a calcium-dependent lectin. This chain is C-type lectin lectoxin-Phi1, found in Philodryas olfersii (Green snake).